We begin with the raw amino-acid sequence, 151 residues long: MQEVTVYSDGACKGNPGLGGWGTVLVSGGHEKELFGGEAVTTNNRMELMAVIEAFRALKRPCRVKVYTDSQYVQKGISEWLAGWKARGWKTADKKPVKNDDLWRTLDELVVTHEVSWHWVKGHAGHPGNERADALANKGVEIARQAIQAGA.

One can recognise an RNase H type-1 domain in the interval 1 to 141; sequence MQEVTVYSDG…ADALANKGVE (141 aa). Mg(2+)-binding residues include Asp-9, Glu-47, Asp-69, and Asp-133.

This sequence belongs to the RNase H family. As to quaternary structure, monomer. Requires Mg(2+) as cofactor.

It is found in the cytoplasm. The enzyme catalyses Endonucleolytic cleavage to 5'-phosphomonoester.. In terms of biological role, endonuclease that specifically degrades the RNA of RNA-DNA hybrids. This is Ribonuclease H from Ralstonia nicotianae (strain ATCC BAA-1114 / GMI1000) (Ralstonia solanacearum).